Here is a 333-residue protein sequence, read N- to C-terminus: MFYDDNADLSIIQRRKVGVIGYGSQGYAHSLSLRDSGVQVRVGLPEGSKSRPKAFEQGLDVDTPAEVAKWADVIMLLVPDTAQADVFENDIEPNLQPGDALFFGHGLNIHFELVKPSGDVTVAMVAPKGPGYLVRRQFVDGKGVPCLIAVNQDPTGTGEALALSYAKAIGGTRAGVIKTTFKDETETDLFGEQAVLCGGTEELVKAGFDVMVEAGYPPEMAYFEVLHELKLIVDLMYEGGIARMNYSVSDTAEFGGYLSGPRVIDADTKERMRGILRDIQDGSFVKKLVANVEGGNKQLEVLRKENAEHPIEVTGKKLRDLMSWVDRQSTETA.

Residues 1-179 enclose the KARI N-terminal Rossmann domain; the sequence is MFYDDNADLS…GGTRAGVIKT (179 aa). NADP(+) is bound by residues 22 to 25, serine 48, serine 50, and 80 to 83; these read YGSQ and DTAQ. Histidine 105 is a catalytic residue. Glycine 131 contacts NADP(+). A KARI C-terminal knotted domain is found at 180–325; it reads TFKDETETDL…KKLRDLMSWV (146 aa). Positions 188, 192, 224, and 228 each coordinate Mg(2+). Residue serine 249 participates in substrate binding.

This sequence belongs to the ketol-acid reductoisomerase family. The cofactor is Mg(2+).

The enzyme catalyses (2R)-2,3-dihydroxy-3-methylbutanoate + NADP(+) = (2S)-2-acetolactate + NADPH + H(+). The catalysed reaction is (2R,3R)-2,3-dihydroxy-3-methylpentanoate + NADP(+) = (S)-2-ethyl-2-hydroxy-3-oxobutanoate + NADPH + H(+). Its pathway is amino-acid biosynthesis; L-isoleucine biosynthesis; L-isoleucine from 2-oxobutanoate: step 2/4. It functions in the pathway amino-acid biosynthesis; L-valine biosynthesis; L-valine from pyruvate: step 2/4. Involved in the biosynthesis of branched-chain amino acids (BCAA). Catalyzes an alkyl-migration followed by a ketol-acid reduction of (S)-2-acetolactate (S2AL) to yield (R)-2,3-dihydroxy-isovalerate. In the isomerase reaction, S2AL is rearranged via a Mg-dependent methyl migration to produce 3-hydroxy-3-methyl-2-ketobutyrate (HMKB). In the reductase reaction, this 2-ketoacid undergoes a metal-dependent reduction by NADPH to yield (R)-2,3-dihydroxy-isovalerate. In Mycobacterium leprae (strain TN), this protein is Ketol-acid reductoisomerase (NADP(+)).